A 611-amino-acid polypeptide reads, in one-letter code: MAASAKKKNKKGKTISLTDFLAEDGGTGGGSTYVSKPVSWADETDDLEGDVSTTWHSNDDDVYRAPPIDRSILPTAPRAAREPNIDRSRLPKSPPYTAFLGNLPYDVTEESIKEFFRGLNISAVRLPREPSNPERLKGFGYAEFEDLDSLLSALSLNEESLGNRRIRVDVADQAQDKDRDDRSFGRDRNRDSDKTDTDWRARPATDSFDDYPPRRGDDSFGDKYRDRYDSDRYRDGYRDGYRDGPRRDMDRYGGRDRYDDRGSRDYDRGYDSRIGSGRRAFGSGYRRDDDYRGGGDRYEDRYDRRDDRSWSSRDDYSRDDYRRDDRGPPQRPKLNLKPRSTPKEDDSSASTSQSTRAASIFGGAKPVDTAAREREVEERLQKEQEKLQRQLDEPKLERRPRERHPSWRSEETQERERSRTGSESSQTGTSTTSSRNARRRESEKSLENETLNKEEDCHSPTSKPPKPDQPLKVMPAPPPKENAWVKRSSNPPARSQSSDTEQQSPTSGGGKVAPAQPSEEGPGRKDENKVDGMNAPKGQTGNSSRGPGDGGNRDHWKESDRKDGKKDQDSRSAPEPKKPEENPASKFSSASKYAALSVDGEDENEGEDYAE.

Over residues 1 to 13 (MAASAKKKNKKGK) the composition is skewed to basic residues. Disordered stretches follow at residues 1 to 37 (MAAS…VSKP), 66 to 93 (PPID…LPKS), and 173 to 611 (QAQD…DYAE). A compositionally biased stretch (basic and acidic residues) spans 79–89 (AAREPNIDRSR). Ser93 is modified (phosphoserine). The region spanning 96-173 (YTAFLGNLPY…RRIRVDVADQ (78 aa)) is the RRM domain. Residues 173–203 (QAQDKDRDDRSFGRDRNRDSDKTDTDWRARP) show a composition bias toward basic and acidic residues. Phosphoserine occurs at positions 192, 207, 219, and 283. Residues 211–271 (YPPRRGDDSF…GSRDYDRGYD (61 aa)) are compositionally biased toward basic and acidic residues. Basic and acidic residues predominate over residues 285-328 (YRRDDDYRGGGDRYEDRYDRRDDRSWSSRDDYSRDDYRRDDRGP). A Glycyl lysine isopeptide (Lys-Gly) (interchain with G-Cter in SUMO2) cross-link involves residue Lys343. The span at 348–359 (SASTSQSTRAAS) shows a compositional bias: low complexity. Ser359 is subject to Phosphoserine. Lys365 is modified (N6-acetyllysine). A compositionally biased stretch (basic and acidic residues) spans 370–420 (AAREREVEERLQKEQEKLQRQLDEPKLERRPRERHPSWRSEETQERERSRT). Position 406 is a phosphoserine; by RPS6KA1 (Ser406). Phosphoserine is present on Ser409. At Thr412 the chain carries Phosphothreonine. Phosphoserine is present on Ser418. Over residues 421–435 (GSESSQTGTSTTSSR) the composition is skewed to low complexity. The residue at position 422 (Ser422) is a Phosphoserine; by RPS6KA1 and RPS6KB1. Residues Ser425, Ser445, Ser459, Ser462, Ser497, and Ser498 each carry the phosphoserine modification. Residues 439–458 (RRESEKSLENETLNKEEDCH) are compositionally biased toward basic and acidic residues. Residues 487–506 (RSSNPPARSQSSDTEQQSPT) show a composition bias toward polar residues. At Thr500 the chain carries Phosphothreonine. Ser504 carries the post-translational modification Phosphoserine. Residue Thr506 is modified to Phosphothreonine. 2 stretches are compositionally biased toward basic and acidic residues: residues 521–530 (GPGRKDENKV) and 551–583 (GNRD…EENP). The span at 584–597 (ASKFSSASKYAALS) shows a compositional bias: low complexity. Lys586 carries the post-translational modification N6-acetyllysine. Residue Ser597 is modified to Phosphoserine. Over residues 599 to 611 (DGEDENEGEDYAE) the composition is skewed to acidic residues.

In terms of assembly, self-associates and interacts with EIF3 p170 subunit. Post-translationally, phosphorylated at Ser-422 by RPS6KA1 and RPS6KB1; phosphorylation enhances the affinity of EIF4B for the EIF3 complex. In response to mTORC1 activation, RPS6KA1-mediated phosphorylation at 'Ser-406' and 'Ser-422' stimulates bicarbonate cotransporter SLC4A7 mRNA translation, increasing SLC4A7 protein abundance and function.

In terms of biological role, required for the binding of mRNA to ribosomes. Functions in close association with EIF4-F and EIF4-A. Binds near the 5'-terminal cap of mRNA in presence of EIF-4F and ATP. Promotes the ATPase activity and the ATP-dependent RNA unwinding activity of both EIF4-A and EIF4-F. This is Eukaryotic translation initiation factor 4B (EIF4B) from Homo sapiens (Human).